Here is a 238-residue protein sequence, read N- to C-terminus: Ribitol-5-phosphate cytidylyltransferase 1 (238 aa).

Residues 7 to 10 (LAGG) and 81 to 87 (GSDRNDT) contribute to the CTP site.

This sequence belongs to the IspD/TarI cytidylyltransferase family. TarI subfamily.

It catalyses the reaction D-ribitol 5-phosphate + CTP + H(+) = CDP-L-ribitol + diphosphate. The protein operates within cell wall biogenesis; poly(ribitol phosphate) teichoic acid biosynthesis. Its function is as follows. Catalyzes the transfer of the cytidylyl group of CTP to D-ribitol 5-phosphate. The sequence is that of Ribitol-5-phosphate cytidylyltransferase 1 from Staphylococcus aureus (strain USA300).